Consider the following 372-residue polypeptide: Ciliary neurotrophic factor receptor subunit alpha (372 aa).

The signal sequence occupies residues 1 to 22 (MAAPVPWACCAVLAAAAAVVYA). The Ig-like C2-type domain maps to 27 to 104 (PQEAPHVQYE…WHLRHQVLLH (78 aa)). Cysteine 46 and cysteine 89 form a disulfide bridge. N-linked (GlcNAc...) asparagine glycosylation is found at asparagine 60, asparagine 70, asparagine 142, and asparagine 190. 2 Fibronectin type-III domains span residues 108 to 205 (PPRE…VKPD) and 206 to 306 (PPEN…TEEP). Positions 290-294 (WSDWS) match the WSXWS motif motif. The segment at 301–340 (PWTEEPRHLTTEAQAPETTTSTTSSLAPPPTTKICDPGEL) is disordered. A compositionally biased stretch (low complexity) spans 311–326 (TEAQAPETTTSTTSSL). Serine 342 carries GPI-anchor amidated serine lipidation. The propeptide at 343 to 372 (GGGPSAPFLIHVPVTLALAAAAATANSLLI) is removed in mature form.

Belongs to the type I cytokine receptor family. Type 3 subfamily. Forms a heterotrimer with LIFR and IL6ST. Interacts with heterodimeric neurotropic cytokine composed of CLCF1/CLC and CRLF1/CLF-1. Either alone or in complex with the heterodimer CLCF1-CRLF1 interacts with SORL1; this interaction may promote internalization and lysosomal degradation. Expressed in retina, brain, spleen, lung, liver and kidney. In the retina it is highly expressed by photoreceptors, but also found in the RPE, inner nuclear layer and ganglion cells.

The protein resides in the cell membrane. Binds to CNTF. The alpha subunit provides the receptor specificity. This Canis lupus familiaris (Dog) protein is Ciliary neurotrophic factor receptor subunit alpha (CNTFR).